We begin with the raw amino-acid sequence, 387 residues long: Pepsin II-1 (387 aa).

Positions 1 to 15 (MKWLLLLGLLALSEC) are cleaved as a signal peptide. The propeptide at 16–59 (IVHKVPLVRKKSLRKNLIEKGLLQDYLKTHTPNLATKYFPKETF) is activation peptide. Residues 75–384 (YFGTISIGTP…DRANNQVGLA (310 aa)) form the Peptidase A1 domain. Asp-93 is an active-site residue. A disulfide bridge connects residues Cys-106 and Cys-111. Phosphoserine is present on Ser-129. Cys-267 and Cys-271 form a disulfide bridge. Asp-276 is an active-site residue. An intrachain disulfide couples Cys-310 to Cys-343.

The protein belongs to the peptidase A1 family.

The protein localises to the secreted. The catalysed reaction is Preferential cleavage: hydrophobic, preferably aromatic, residues in P1 and P1' positions. Cleaves 1-Phe-|-Val-2, 4-Gln-|-His-5, 13-Glu-|-Ala-14, 14-Ala-|-Leu-15, 15-Leu-|-Tyr-16, 16-Tyr-|-Leu-17, 23-Gly-|-Phe-24, 24-Phe-|-Phe-25 and 25-Phe-|-Tyr-26 bonds in the B chain of insulin.. Shows particularly broad specificity; although bonds involving phenylalanine and leucine are preferred, many others are also cleaved to some extent. In Oryctolagus cuniculus (Rabbit), this protein is Pepsin II-1.